Here is a 327-residue protein sequence, read N- to C-terminus: Ribosomal RNA large subunit methyltransferase F (327 aa).

It belongs to the methyltransferase superfamily. METTL16/RlmF family.

It is found in the cytoplasm. It carries out the reaction adenosine(1618) in 23S rRNA + S-adenosyl-L-methionine = N(6)-methyladenosine(1618) in 23S rRNA + S-adenosyl-L-homocysteine + H(+). Specifically methylates the adenine in position 1618 of 23S rRNA. This is Ribosomal RNA large subunit methyltransferase F from Marinomonas sp. (strain MWYL1).